Reading from the N-terminus, the 210-residue chain is Small heat shock protein hspG6 (210 aa).

In terms of domain architecture, sHSP spans Lys-34–Asn-210. The interval Val-93–Thr-151 is disordered. Residues Asp-126–Thr-138 are compositionally biased toward low complexity. Basic and acidic residues predominate over residues Lys-139–Thr-151.

The protein belongs to the small heat shock protein (HSP20) family.

The protein is Small heat shock protein hspG6 (hspG6) of Dictyostelium discoideum (Social amoeba).